A 168-amino-acid chain; its full sequence is Cell division inhibitor SulA (168 aa).

The segment at Ala105–Tyr111 is ftsZ binding. A lon protease binding region spans residues Arg161 to His168.

Belongs to the SulA family. As to quaternary structure, interacts with FtsZ. Is rapidly cleaved and degraded by the Lon protease once DNA damage is repaired.

Its function is as follows. Component of the SOS system and an inhibitor of cell division. Accumulation of SulA causes rapid cessation of cell division and the appearance of long, non-septate filaments. In the presence of GTP, binds a polymerization-competent form of FtsZ in a 1:1 ratio, thus inhibiting FtsZ polymerization and therefore preventing it from participating in the assembly of the Z ring. This mechanism prevents the premature segregation of damaged DNA to daughter cells during cell division. The polypeptide is Cell division inhibitor SulA (Cronobacter turicensis (strain DSM 18703 / CCUG 55852 / LMG 23827 / z3032)).